A 621-amino-acid polypeptide reads, in one-letter code: Type 2 DNA topoisomerase 6 subunit B (621 aa).

Residues Asn48, Asp80, 101–102, 111–118, and Lys435 contribute to the ATP site; these read SR and GQQGIGIS.

It belongs to the TOP6B family. As to quaternary structure, homodimer. Heterotetramer of two Top6A and two Top6B chains.

It carries out the reaction ATP-dependent breakage, passage and rejoining of double-stranded DNA.. Relaxes both positive and negative superturns and exhibits a strong decatenase activity. The protein is Type 2 DNA topoisomerase 6 subunit B of Methanosarcina acetivorans (strain ATCC 35395 / DSM 2834 / JCM 12185 / C2A).